A 249-amino-acid polypeptide reads, in one-letter code: Phosphate import ATP-binding protein PstB 2 (249 aa).

One can recognise an ABC transporter domain in the interval phenylalanine 4–valine 244. Position 36–43 (glycine 36–serine 43) interacts with ATP.

It belongs to the ABC transporter superfamily. Phosphate importer (TC 3.A.1.7) family. As to quaternary structure, the complex is composed of two ATP-binding proteins (PstB), two transmembrane proteins (PstC and PstA) and a solute-binding protein (PstS).

The protein localises to the cell inner membrane. The enzyme catalyses phosphate(out) + ATP + H2O = ADP + 2 phosphate(in) + H(+). Its function is as follows. Part of the ABC transporter complex PstSACB involved in phosphate import. Responsible for energy coupling to the transport system. This chain is Phosphate import ATP-binding protein PstB 2, found in Vibrio vulnificus (strain CMCP6).